The following is a 303-amino-acid chain: Tumor necrosis factor receptor type 1-associated DEATH domain protein (303 aa).

Positions 141 to 157 match the Nuclear export signal motif; sequence QKDDELAEIDERLKSIK. A Death domain is found at 208–298; it reads TSAHIQHFAK…SIALDLLSLN (91 aa). The short motif at 224 to 237 is the Nuclear localization signal element; that stretch reads KPVGRSLGKTCRAL.

In terms of assembly, heterodimer with tnfrsf1a.

Its subcellular location is the nucleus. It is found in the cytoplasm. It localises to the cytoskeleton. In terms of biological role, adapter molecule for tnfrsf1a that specifically associates with the cytoplasmic domain of activated tnfrsf1a mediating its interaction with fadd. This is Tumor necrosis factor receptor type 1-associated DEATH domain protein from Xenopus laevis (African clawed frog).